The chain runs to 560 residues: Kinesin light chain 1 (560 aa).

Residues valine 31–valine 99 are a coiled coil. Residues lysine 155 to leucine 176 show a composition bias toward basic and acidic residues. The disordered stretch occupies residues lysine 155 to glutamine 203. Residue serine 162 is modified to Phosphoserine. Residues glutamine 192 to glutamine 203 are compositionally biased toward low complexity. 5 TPR repeats span residues leucine 213–threonine 246, alanine 255–threonine 288, alanine 297–valine 330, alanine 339–lysine 372, and alanine 381–arginine 414. Residue tyrosine 449 is modified to Phosphotyrosine. At serine 460 the chain carries Phosphoserine. The TPR 6 repeat unit spans residues threonine 464 to glycine 497. Phosphoserine; by AMPK occurs at positions 521 and 524.

It belongs to the kinesin light chain family. As to quaternary structure, oligomeric complex composed of two heavy chains and two light chains. Interacts with SPAG9. Interacts with ATCAY; may link mitochondria to KLC1 and regulate mitochondria localization into neuron projections. Interacts (via TPR repeats) with TOR1A; the interaction associates TOR1A with the kinesin oligomeric complex. Interacts with BORCS5. Interacts with MAPK8IP3/JIP3 and NTRK2/TRKB; interaction with NTRK2/TRKB is mediated by MAPK8IP3/JIP3. Interacts with CLSTN1; phosphorylation at Ser-460 inhibits interaction with CLSTN1. In terms of processing, phosphorylation at Ser-460 by ERK inhibits interaction with CLSTN1 and localization to cytoplasmic vesicles.

Its subcellular location is the cell projection. The protein resides in the growth cone. The protein localises to the cytoplasmic vesicle. It is found in the cytoplasm. It localises to the cytoskeleton. Functionally, kinesin is a microtubule-associated force-producing protein that may play a role in organelle transport. The light chain may function in coupling of cargo to the heavy chain or in the modulation of its ATPase activity. The polypeptide is Kinesin light chain 1 (KLC1) (Pongo abelii (Sumatran orangutan)).